The sequence spans 674 residues: Pentatricopeptide repeat-containing protein At4g17616 (674 aa).

5 PPR repeats span residues 409-443 (GSRL…GYPM), 444-478 (ELAT…GLIT), 519-553 (MLYE…KIPP), 554-584 (TVQS…IKRN), and 593-627 (TQDL…DMYN).

It belongs to the PPR family. P subfamily.

The sequence is that of Pentatricopeptide repeat-containing protein At4g17616 from Arabidopsis thaliana (Mouse-ear cress).